A 486-amino-acid chain; its full sequence is Glutamate--tRNA ligase (486 aa).

The 'HIGH' region motif lies at 11–21 (PSPTGLLHIGN). Positions 255 to 259 (KLSKR) match the 'KMSKS' region motif. Position 258 (lysine 258) interacts with ATP.

The protein belongs to the class-I aminoacyl-tRNA synthetase family. Glutamate--tRNA ligase type 1 subfamily. As to quaternary structure, monomer.

The protein resides in the cytoplasm. The enzyme catalyses tRNA(Glu) + L-glutamate + ATP = L-glutamyl-tRNA(Glu) + AMP + diphosphate. In terms of biological role, catalyzes the attachment of glutamate to tRNA(Glu) in a two-step reaction: glutamate is first activated by ATP to form Glu-AMP and then transferred to the acceptor end of tRNA(Glu). This Streptococcus pneumoniae (strain Hungary19A-6) protein is Glutamate--tRNA ligase.